The chain runs to 199 residues: MRSFVLRARAAPTTSKALLEGVGNEAHTEILAHTMMNTMFVAQSHREDVVVHFVLESTKDFSRTITIRSNDITNIGGFHESTLIAAVARALDASVGMGKEQLREVEPGITVRTVSFERLVQELAEDHQLYMLDKKGEFVRDAEIGGNPCFLLTDHIPMPKKSYNSLKRLGTEKISLGPKMLFASQCVVLIHNELDIREF.

Positions 132 and 186 each coordinate S-adenosyl-L-methionine.

It belongs to the methyltransferase superfamily. TrmY family.

The protein resides in the cytoplasm. The sequence is that of Putative pseudouridine methyltransferase from Vibrio campbellii (strain ATCC BAA-1116).